Consider the following 141-residue polypeptide: Large ribosomal subunit protein uL11 (141 aa).

It belongs to the universal ribosomal protein uL11 family. Part of the ribosomal stalk of the 50S ribosomal subunit. Interacts with L10 and the large rRNA to form the base of the stalk. L10 forms an elongated spine to which L12 dimers bind in a sequential fashion forming a multimeric L10(L12)X complex. Post-translationally, one or more lysine residues are methylated.

Forms part of the ribosomal stalk which helps the ribosome interact with GTP-bound translation factors. This is Large ribosomal subunit protein uL11 from Streptococcus suis (strain 05ZYH33).